A 131-amino-acid polypeptide reads, in one-letter code: Arsenate reductase 1 (131 aa).

Catalysis depends on nucleophile residues cysteine 10, cysteine 82, and cysteine 89. Disulfide bonds link cysteine 10–cysteine 82 and cysteine 82–cysteine 89.

Belongs to the low molecular weight phosphotyrosine protein phosphatase family. Thioredoxin-coupled ArsC subfamily.

The protein resides in the cytoplasm. The catalysed reaction is arsenate + [thioredoxin]-dithiol + H(+) = arsenite + [thioredoxin]-disulfide + H2O. Its function is as follows. Catalyzes the reduction of arsenate [As(V)] to arsenite [As(III)]. The chain is Arsenate reductase 1 from Staphylococcus saprophyticus subsp. saprophyticus (strain ATCC 15305 / DSM 20229 / NCIMB 8711 / NCTC 7292 / S-41).